We begin with the raw amino-acid sequence, 430 residues long: Aspartate aminotransferase, mitochondrial (430 aa).

Residues 1–29 (MALLHSSRILSGMAAAFHPGLAAAASARA) constitute a mitochondrion transit peptide. Threonine 48 carries the post-translational modification Phosphothreonine. Position 59 is an N6-acetyllysine (lysine 59). Glycine 65 is a substrate binding site. At lysine 73 the chain carries N6-acetyllysine; alternate. Lysine 73 is modified (N6-succinyllysine; alternate). The residue at position 82 (lysine 82) is an N6-acetyllysine. N6-acetyllysine; alternate is present on lysine 90. Residue lysine 90 is modified to N6-succinyllysine; alternate. Tyrosine 96 is modified (3'-nitrotyrosine; alternate). A Phosphotyrosine; alternate modification is found at tyrosine 96. Residues lysine 107 and lysine 122 each carry the N6-acetyllysine; alternate modification. Lysine 107 and lysine 122 each carry N6-succinyllysine; alternate. Serine 143 is modified (phosphoserine). At lysine 159 the chain carries N6-acetyllysine; alternate. Lysine 159 is subject to N6-succinyllysine; alternate. Tryptophan 162 contacts substrate. Lysine 185 bears the N6-acetyllysine; alternate mark. Residue lysine 185 is modified to N6-succinyllysine; alternate. Position 215 (asparagine 215) interacts with substrate. An N6-succinyllysine modification is found at lysine 227. N6-acetyllysine is present on lysine 234. Lysine 279 and lysine 296 each carry N6-acetyllysine; alternate. An N6-(pyridoxal phosphate)lysine; alternate modification is found at lysine 279. Residue lysine 296 is modified to N6-succinyllysine; alternate. Residue lysine 302 is modified to N6-acetyllysine. Position 309 is an N6-acetyllysine; alternate (lysine 309). Lysine 309 bears the N6-succinyllysine; alternate mark. Arginine 313 is subject to Asymmetric dimethylarginine. Position 338 is an N6-acetyllysine; alternate (lysine 338). The residue at position 338 (lysine 338) is an N6-succinyllysine; alternate. Lysine 345 is subject to N6-acetyllysine. An N6-acetyllysine; alternate modification is found at lysine 363. Lysine 363 is modified (N6-succinyllysine; alternate). An N6-acetyllysine mark is found at lysine 364 and lysine 387. N6-acetyllysine; alternate occurs at positions 396 and 404. An N6-succinyllysine; alternate mark is found at lysine 396 and lysine 404. Position 407 (arginine 407) interacts with substrate.

This sequence belongs to the class-I pyridoxal-phosphate-dependent aminotransferase family. As to quaternary structure, homodimer. The cofactor is pyridoxal 5'-phosphate. Post-translationally, acetylation of Lys-296, Lys-345 and Lys-363 is observed in liver mitochondria from fasted mice but not from fed mice. As to expression, detected in brain (at protein level).

Its subcellular location is the mitochondrion matrix. The protein resides in the cell membrane. The catalysed reaction is L-aspartate + 2-oxoglutarate = oxaloacetate + L-glutamate. It catalyses the reaction L-kynurenine + 2-oxoglutarate = kynurenate + L-glutamate + H2O. Functionally, catalyzes the irreversible transamination of the L-tryptophan metabolite L-kynurenine to form kynurenic acid (KA). As a member of the malate-aspartate shuttle, it has a key role in the intracellular NAD(H) redox balance. Is important for metabolite exchange between mitochondria and cytosol, and for amino acid metabolism. Facilitates cellular uptake of long-chain free fatty acids. In Mus musculus (Mouse), this protein is Aspartate aminotransferase, mitochondrial (Got2).